The primary structure comprises 764 residues: A-type ATP synthase subunit A (764 aa).

It belongs to the ATPase alpha/beta chains family. Has multiple subunits with at least A(3), B(3), C, D, E, F, H, I and proteolipid K(x). This protein undergoes a protein self splicing that involves a post-translational excision of the VDE intervening region (intein) followed by peptide ligation.

Its subcellular location is the cell membrane. It catalyses the reaction ATP + H2O + 4 H(+)(in) = ADP + phosphate + 5 H(+)(out). In terms of biological role, component of the A-type ATP synthase that produces ATP from ADP in the presence of a proton gradient across the membrane. The A chain is the catalytic subunit. This Thermoplasma acidophilum (strain ATCC 25905 / DSM 1728 / JCM 9062 / NBRC 15155 / AMRC-C165) protein is A-type ATP synthase subunit A.